An 83-amino-acid polypeptide reads, in one-letter code: Mu-theraphotoxin-Hhn2p (83 aa).

Positions 1-21 are cleaved as a signal peptide; it reads MKASMYLALAGLVLLFVVGYA. Positions 22-48 are excised as a propeptide; sequence SESEEKEFPRELLSKIFAVDDFKGEER. Disulfide bonds link cysteine 50-cysteine 65, cysteine 57-cysteine 70, and cysteine 64-cysteine 77. Leucine 81 is modified (leucine amide).

This sequence belongs to the neurotoxin 10 (Hwtx-1) family. 15 (Hntx-3) subfamily. In terms of assembly, monomer. Expressed by the venom gland.

The protein resides in the secreted. Its function is as follows. Lethal neurotoxin. Selectively blocks tetrodotoxin-sensitive voltage-gated sodium channels (Nav). Does not affect tetrodotoxin-resistant voltage-gated sodium channels or calcium channels. The protein is Mu-theraphotoxin-Hhn2p of Cyriopagopus hainanus (Chinese bird spider).